Here is a 215-residue protein sequence, read N- to C-terminus: Large ribosomal subunit protein uL1 (215 aa).

Belongs to the universal ribosomal protein uL1 family. In terms of assembly, part of the 50S ribosomal subunit.

Its function is as follows. Binds directly to 23S rRNA. Probably involved in E site tRNA release. In terms of biological role, protein L1 is also a translational repressor protein, it controls the translation of its operon by binding to its mRNA. This Cenarchaeum symbiosum (strain A) protein is Large ribosomal subunit protein uL1.